A 184-amino-acid chain; its full sequence is MNTNSNTMVMNDANQAQITATFTKKILAHLDDPDSNKLAQFVQLFNPNNCRIIFNATPFAQATVFLQMWQNQVVQTQHALTGVDYHAIPGSGTLICNVNCKVRFDESGRDKMGQDATVPIQPNNTGNRNRPNDMNKPRPLWGPYFGISLQLIIDDRIFRNDFNGVISGFNYNMVYKPEDSLLKI.

The tract at residues 111–135 is disordered; the sequence is KMGQDATVPIQPNNTGNRNRPNDMN. Over residues 120–129 the composition is skewed to polar residues; that stretch reads IQPNNTGNRN. At T125 the chain carries Phosphothreonine.

Interacts with MEX67.

It localises to the nucleus. In terms of biological role, affects mRNA transport from the nucleus to the cytoplasm. This Saccharomyces cerevisiae (strain ATCC 204508 / S288c) (Baker's yeast) protein is mRNA transport regulator MTR2 (MTR2).